A 421-amino-acid chain; its full sequence is MDYGKTLTQSLLSNGADKRENKMAFNPSVFKQHFPYLQQADAVVYLDSAATALKPQVLTDATIAFYQSAGSVHRSQYDEKQTALFEQARENVKNFIGAESEETIIWTSGTTHAINCVARGLSHQLHPKAEIIISEADHHANFVTWSEIARQYGATLHILPINEQWLIEEQDLIAVLNTNTVLVALNMVSNVTGTEQPVANLIKLIRQHSHALVLVDAAQAISHLPIDLQRLDADFIAFSAHKLYGPNGLGVLSGKRHALEQLHPLLYGGKMVERVSAQHIRFAELPYRLEAGTPNIAGVIGFNAVLEWLSQWDLTAAEQHAIALAEQCKMRLKNYPHCQLFLSPQPSSIVCFVFNGIATSDIATLLAEQNIALRAGEHCAQPYLARLGQHSTLRLSFAPYNQQADVDAFFSALDNALALLD.

Lysine 242 is modified (N6-(pyridoxal phosphate)lysine).

Belongs to the class-V pyridoxal-phosphate-dependent aminotransferase family. Csd subfamily. Requires pyridoxal 5'-phosphate as cofactor.

It catalyses the reaction (sulfur carrier)-H + L-cysteine = (sulfur carrier)-SH + L-alanine. In terms of biological role, catalyzes the removal of elemental sulfur and selenium atoms from L-cysteine, L-cystine, L-selenocysteine, and L-selenocystine to produce L-alanine. The protein is Probable cysteine desulfurase (csd) of Pasteurella multocida (strain Pm70).